The primary structure comprises 153 residues: MIADSSSWLKLTKKVRFGDTDAAGVMHFHQLLRWCHEAWEESLERYGLEAQAVFPGCRGQEQWPAIALPVVHCRADFLRPVHGGDQLSLHLTPQRLDPSSFEVHHRFLLEQQDVAHGWIRHVAISTETRRRSALPDAIERWLEASLIGRISEL.

D21 is a catalytic residue.

It belongs to the 4-hydroxybenzoyl-CoA thioesterase family. DHNA-CoA hydrolase subfamily.

The catalysed reaction is 1,4-dihydroxy-2-naphthoyl-CoA + H2O = 1,4-dihydroxy-2-naphthoate + CoA + H(+). The protein operates within cofactor biosynthesis; phylloquinone biosynthesis. It participates in quinol/quinone metabolism; 1,4-dihydroxy-2-naphthoate biosynthesis; 1,4-dihydroxy-2-naphthoate from chorismate: step 7/7. Its function is as follows. Catalyzes the hydrolysis of 1,4-dihydroxy-2-naphthoyl-CoA (DHNA-CoA) to 1,4-dihydroxy-2-naphthoate (DHNA), a reaction involved in phylloquinone (vitamin K1) biosynthesis. This chain is 1,4-dihydroxy-2-naphthoyl-CoA hydrolase, found in Synechococcus sp. (strain WH7803).